Reading from the N-terminus, the 214-residue chain is Large ribosomal subunit protein uL18 (214 aa).

The protein belongs to the universal ribosomal protein uL18 family. Part of the 50S ribosomal subunit. Contacts the 5S and 23S rRNAs.

In terms of biological role, this is one of the proteins that bind and probably mediate the attachment of the 5S RNA into the large ribosomal subunit, where it forms part of the central protuberance. This chain is Large ribosomal subunit protein uL18, found in Aeropyrum pernix (strain ATCC 700893 / DSM 11879 / JCM 9820 / NBRC 100138 / K1).